The sequence spans 273 residues: 3-methyl-2-oxobutanoate hydroxymethyltransferase 2 (273 aa).

The Mg(2+) site is built by D50 and D89. Residues 50–51, D89, and K119 contribute to the 3-methyl-2-oxobutanoate site; that span reads DS. E121 lines the Mg(2+) pocket. The Proton acceptor role is filled by E188.

This sequence belongs to the PanB family. In terms of assembly, homodecamer; pentamer of dimers. The cofactor is Mg(2+).

It localises to the cytoplasm. It carries out the reaction 3-methyl-2-oxobutanoate + (6R)-5,10-methylene-5,6,7,8-tetrahydrofolate + H2O = 2-dehydropantoate + (6S)-5,6,7,8-tetrahydrofolate. It functions in the pathway cofactor biosynthesis; (R)-pantothenate biosynthesis; (R)-pantoate from 3-methyl-2-oxobutanoate: step 1/2. In terms of biological role, catalyzes the reversible reaction in which hydroxymethyl group from 5,10-methylenetetrahydrofolate is transferred onto alpha-ketoisovalerate to form ketopantoate. This chain is 3-methyl-2-oxobutanoate hydroxymethyltransferase 2, found in Zymomonas mobilis subsp. mobilis (strain ATCC 31821 / ZM4 / CP4).